We begin with the raw amino-acid sequence, 392 residues long: Probable tRNA pseudouridine synthase D 1 (392 aa).

Asp92 (nucleophile) is an active-site residue. Positions 167–354 (YFLNYYGVQR…FIGDRRAMIG (188 aa)) constitute a TRUD domain.

This sequence belongs to the pseudouridine synthase TruD family.

It catalyses the reaction uridine(13) in tRNA = pseudouridine(13) in tRNA. Its function is as follows. Could be responsible for synthesis of pseudouridine from uracil-13 in transfer RNAs. The protein is Probable tRNA pseudouridine synthase D 1 of Methanocaldococcus jannaschii (strain ATCC 43067 / DSM 2661 / JAL-1 / JCM 10045 / NBRC 100440) (Methanococcus jannaschii).